The sequence spans 1284 residues: ATP-dependent helicase fft2 (1284 aa).

Polar residues-rich tracts occupy residues 1 to 10 (MLPYNSNYLS) and 20 to 57 (ENPQ…AMYG). 5 disordered regions span residues 1 to 57 (MLPY…AMYG), 185 to 252 (AQPP…LPPV), 317 to 339 (KQSP…QSQK), 353 to 388 (STQA…EEPE), and 446 to 465 (PDDV…KNPM). Low complexity predominate over residues 201–241 (RSNSRSSARSTARSAPRSTQRSRSSSANPVTTPPVNNTLLT). 2 stretches are compositionally biased toward polar residues: residues 320–339 (PVAS…QSQK) and 353–372 (STQA…ASKK). Ser-323 carries the phosphoserine modification. The span at 376 to 388 (EEDEFYDSEEEPE) shows a compositional bias: acidic residues. Ser-383 carries the phosphoserine modification. Residues 562–730 (HLLYQQKLSG…VSLLAFILPN (169 aa)) enclose the Helicase ATP-binding domain. An ATP-binding site is contributed by 575–582 (DEMGLGKT). The short motif at 681-684 (DEGH) is the DEGH box element. Residues 816–839 (QQLRRDDKRNKRSKNDEESDGKSL) form a disordered region. Over residues 818–831 (LRRDDKRNKRSKND) the composition is skewed to basic and acidic residues. A Helicase C-terminal domain is found at 928-1079 (VLKELLPKMK…SLSSDGKDRE (152 aa)). The tract at residues 1088–1284 (DMLDEENNGN…SEVDNNAAKD (197 aa)) is disordered. A compositionally biased stretch (polar residues) spans 1095-1107 (NGNNTKPEITGNE). Over residues 1143-1177 (EKTDLADGDEKANIKTEMKSETVEGDNKELRETMK) the composition is skewed to basic and acidic residues. Over residues 1180 to 1194 (NVQTDSNAAVPSSKS) the composition is skewed to polar residues. Composition is skewed to basic and acidic residues over residues 1243–1256 (QLEK…KKPD) and 1266–1284 (EEEK…AAKD).

This sequence belongs to the SNF2/RAD54 helicase family.

The protein localises to the cytoplasm. The protein resides in the nucleus. The catalysed reaction is ATP + H2O = ADP + phosphate + H(+). Its function is as follows. DNA helicase that possesses intrinsic ATP-dependent nucleosome-remodeling activity and is required for heterochromatin organization. This chain is ATP-dependent helicase fft2 (fft2), found in Schizosaccharomyces pombe (strain 972 / ATCC 24843) (Fission yeast).